Here is a 115-residue protein sequence, read N- to C-terminus: UPF0102 protein SYO3AOP1_0546 (115 aa).

The protein belongs to the UPF0102 family.

In Sulfurihydrogenibium sp. (strain YO3AOP1), this protein is UPF0102 protein SYO3AOP1_0546.